Reading from the N-terminus, the 311-residue chain is Meiotically up-regulated gene 146 protein (311 aa).

The protein resides in the cytoplasm. It is found in the nucleus. Has a role in sporulation. In Schizosaccharomyces pombe (strain 972 / ATCC 24843) (Fission yeast), this protein is Meiotically up-regulated gene 146 protein (mug146).